The chain runs to 321 residues: Lipoyl synthase (321 aa).

[4Fe-4S] cluster-binding residues include C60, C65, C71, C86, C90, C93, and S299. The 217-residue stretch at 72–288 (WEKKHATFMI…ETIGRTKGFL (217 aa)) folds into the Radical SAM core domain.

The protein belongs to the radical SAM superfamily. Lipoyl synthase family. The cofactor is [4Fe-4S] cluster.

The protein resides in the cytoplasm. It catalyses the reaction [[Fe-S] cluster scaffold protein carrying a second [4Fe-4S](2+) cluster] + N(6)-octanoyl-L-lysyl-[protein] + 2 oxidized [2Fe-2S]-[ferredoxin] + 2 S-adenosyl-L-methionine + 4 H(+) = [[Fe-S] cluster scaffold protein] + N(6)-[(R)-dihydrolipoyl]-L-lysyl-[protein] + 4 Fe(3+) + 2 hydrogen sulfide + 2 5'-deoxyadenosine + 2 L-methionine + 2 reduced [2Fe-2S]-[ferredoxin]. It participates in protein modification; protein lipoylation via endogenous pathway; protein N(6)-(lipoyl)lysine from octanoyl-[acyl-carrier-protein]: step 2/2. Functionally, catalyzes the radical-mediated insertion of two sulfur atoms into the C-6 and C-8 positions of the octanoyl moiety bound to the lipoyl domains of lipoate-dependent enzymes, thereby converting the octanoylated domains into lipoylated derivatives. This chain is Lipoyl synthase, found in Brucella anthropi (strain ATCC 49188 / DSM 6882 / CCUG 24695 / JCM 21032 / LMG 3331 / NBRC 15819 / NCTC 12168 / Alc 37) (Ochrobactrum anthropi).